A 298-amino-acid chain; its full sequence is METVHSTFLLLLFVPLTQQAPQSQLDSHVNYEYATGNSEETKFSQDYEDKYLDGKSIKEKETMIIPDEKSLQLQKDEVIPSLPTKKENDEMPTCLLCVCLSGSVYCEEVDIDAVPPLPKESAYLYARFNKIKKLTAKDFADMPNLRRLDFTGNLIEDIEDGTFSKLSLLEELTLAENQLLRLPVLPPKLTLLNAKHNKIKSKGIKANTFKKLNKLSFLYLDHNDLESVPPNLPESLRVIHLQFNSISSLTDDTFCKANDTRYIRERIEEIRLEGNPIALGKHPNSFICLKRLPIGSYF.

Positions 1-19 (METVHSTFLLLLFVPLTQQ) are cleaved as a signal peptide. N-linked (GlcNAc...) (keratan sulfate) asparagine glycosylation occurs at Asn-88. LRR repeat units lie at residues 112–131 (DAVP…FNKI), 132–155 (KKLT…GNLI), 156–179 (EDIE…ENQL), 180–199 (LRLP…HNKI), 200–225 (KSKG…HNDL), 226–246 (ESVP…FNSI), and 247–277 (SSLT…GNPI). Cys-255 and Cys-288 are joined by a disulfide. Asn-258 carries N-linked (GlcNAc...) (keratan sulfate) asparagine glycosylation.

It belongs to the small leucine-rich proteoglycan (SLRP) family. SLRP class III subfamily. In terms of processing, contains keratan sulfate.

The protein localises to the secreted. Its subcellular location is the extracellular space. It localises to the extracellular matrix. Functionally, induces bone formation in conjunction with TGF-beta-1 or TGF-beta-2. This chain is Mimecan (Ogn), found in Mus musculus (Mouse).